The sequence spans 906 residues: ATP-dependent DNA helicase PIF1 (906 aa).

2 disordered regions span residues 77–146 and 229–297; these read DSEI…SSTF and LEGS…PFKV. Positions 78–87 are enriched in basic and acidic residues; the sequence is SEIKESDDLS. Residues 88–119 show a composition bias toward polar residues; it reads KGQSHVYNGSPVTKNSILQIEKQQIQKSPRPT. The segment covering 120–132 has biased composition (basic and acidic residues); that stretch reads ETNKRMQIRKDPD. Polar residues predominate over residues 234–261; that stretch reads NKVQADNASPFRITSSFSSPSQIQNQGV. The segment covering 273-291 has biased composition (low complexity); that stretch reads QNVSSASQSSSPPMTVSQV. 390-397 serves as a coordination point for ATP; the sequence is GSAGTGKS. The DNA-binding element occupies 840–859; sequence QAYVALSRAVSRAGLQVLNF.

This sequence belongs to the helicase family. PIF1 subfamily. In terms of assembly, monomer. Interacts with telomerase. Mg(2+) is required as a cofactor.

Its subcellular location is the nucleus. It localises to the mitochondrion. The enzyme catalyses Couples ATP hydrolysis with the unwinding of duplex DNA at the replication fork by translocating in the 5'-3' direction. This creates two antiparallel DNA single strands (ssDNA). The leading ssDNA polymer is the template for DNA polymerase III holoenzyme which synthesizes a continuous strand.. It carries out the reaction ATP + H2O = ADP + phosphate + H(+). In terms of biological role, DNA-dependent ATPase and 5'-3' DNA helicase required for the maintenance of both mitochondrial and nuclear genome stability. Efficiently unwinds G-quadruplex (G4) DNA structures and forked RNA-DNA hybrids. Resolves G4 structures, preventing replication pausing and double-strand breaks (DSBs) at G4 motifs. Involved in the maintenance of telomeric DNA. Inhibits telomere elongation, de novo telomere formation and telomere addition to DSBs via catalytic inhibition of telomerase. Reduces the processivity of telomerase by displacing active telomerase from DNA ends. Releases telomerase by unwinding the short telomerase RNA/telomeric DNA hybrid that is the intermediate in the telomerase reaction. Involved in the maintenance of ribosomal (rDNA). Required for efficient fork arrest at the replication fork barrier within rDNA. Involved in the maintenance of mitochondrial (mtDNA). Required to maintain mtDNA under conditions that introduce dsDNA breaks in mtDNA, either preventing or repairing dsDNA breaks. May inhibit replication progression to allow time for repair. May have a general role in chromosomal replication by affecting Okazaki fragment maturation. May have a role in conjunction with DNA2 helicase/nuclease in 5'-flap extension during Okazaki fragment processing. The sequence is that of ATP-dependent DNA helicase PIF1 from Candida albicans (strain SC5314 / ATCC MYA-2876) (Yeast).